A 160-amino-acid polypeptide reads, in one-letter code: Major pollen allergen Bet v 1-M/N (160 aa).

4 residues coordinate brassinolide: Lys55, Tyr82, Tyr84, and Asn101.

It belongs to the BetVI family.

It is found in the cytoplasm. Its function is as follows. May be a general steroid carrier protein. The polypeptide is Major pollen allergen Bet v 1-M/N (BETV1M) (Betula pendula (European white birch)).